A 508-amino-acid chain; its full sequence is Light-independent protochlorophyllide reductase subunit B (508 aa).

Residue aspartate 36 participates in [4Fe-4S] cluster binding. The active-site Proton donor is aspartate 294. A substrate-binding site is contributed by 429–430 (GM).

It belongs to the ChlB/BchB/BchZ family. Protochlorophyllide reductase is composed of three subunits; ChlL, ChlN and ChlB. Forms a heterotetramer of two ChlB and two ChlN subunits. [4Fe-4S] cluster is required as a cofactor.

The catalysed reaction is chlorophyllide a + oxidized 2[4Fe-4S]-[ferredoxin] + 2 ADP + 2 phosphate = protochlorophyllide a + reduced 2[4Fe-4S]-[ferredoxin] + 2 ATP + 2 H2O. It participates in porphyrin-containing compound metabolism; chlorophyll biosynthesis (light-independent). Component of the dark-operative protochlorophyllide reductase (DPOR) that uses Mg-ATP and reduced ferredoxin to reduce ring D of protochlorophyllide (Pchlide) to form chlorophyllide a (Chlide). This reaction is light-independent. The NB-protein (ChlN-ChlB) is the catalytic component of the complex. The sequence is that of Light-independent protochlorophyllide reductase subunit B from Crocosphaera subtropica (strain ATCC 51142 / BH68) (Cyanothece sp. (strain ATCC 51142)).